The sequence spans 361 residues: MEGGSDKESKVFCDSPSPNPKGEMSVPSNVRGKKKLPKELKLPKEVFEKPAPAPTPPRDLDSKAYVTIGEKNFVVKADDLEQIGELGRGAYGVVDKMRHVPSGVIMAVKRIRATVNTQEQKRLLMDLDISMRTVDCFYTVTFYGALFREGDVWICMELMDTSLDKFYKQVHEKGKTIPEDILGKITVSIVKALEHLHSNLSVIHRDVKPSNVLINMQGQVKMCDFGISGYLVDSVAKTMDAGCKPYMAPERINPETNQKGYNVKSDIWSLGITMIELAILRFPYDSWGTPFQQLKQVVEEPSPQLPADRFSADFVDFTSQCLRKNSTERPTYTELMQHPFFTLHDSKDTDVASFVKTILGD.

Composition is skewed to basic and acidic residues over residues 1 to 11 (MEGGSDKESKV) and 37 to 48 (PKELKLPKEVFE). The segment at 1-61 (MEGGSDKESK…PAPTPPRDLD (61 aa)) is disordered. A d domain region spans residues 30-46 (VRGKKKLPKELKLPKEV). In terms of domain architecture, Protein kinase spans 80 to 341 (LEQIGELGRG…YTELMQHPFF (262 aa)). ATP contacts are provided by residues 86–94 (LGRGAYGVV) and lysine 109. Aspartate 206 functions as the Proton acceptor in the catalytic mechanism. The residue at position 234 (serine 234) is a Phosphoserine; by MAPK3. Threonine 238 is modified (phosphothreonine; by MAPK3). Residues 338 to 361 (HPFFTLHDSKDTDVASFVKTILGD) form a DVD domain region.

The protein belongs to the protein kinase superfamily. STE Ser/Thr protein kinase family. MAP kinase kinase subfamily. In terms of assembly, dimer. Interacts (via its D domain) with its MAP kinase substrates. Interacts (via its DVD domain) with MAP3Ks activators. In terms of processing, weakly autophosphorylated. Phosphorylated at Ser-234 and Thr-238 by the majority of M3Ks.

The protein localises to the nucleus. It localises to the cytoplasm. It is found in the cytoskeleton. It carries out the reaction L-seryl-[protein] + ATP = O-phospho-L-seryl-[protein] + ADP + H(+). The enzyme catalyses L-threonyl-[protein] + ATP = O-phospho-L-threonyl-[protein] + ADP + H(+). The catalysed reaction is L-tyrosyl-[protein] + ATP = O-phospho-L-tyrosyl-[protein] + ADP + H(+). Its activity is regulated as follows. Activated by dual phosphorylation on Ser-234 and Thr-238 in response to a variety of cellular stresses, including UV radiation, osmotic shock, hypoxia, inflammatory cytokines, interferon gamma (IFNG), and less often by growth factors. MAP2K6/MKK6 is activated by the majority of M3Ks. Its function is as follows. Dual specificity protein kinase which acts as an essential component of the MAP kinase signal transduction pathway. Catalyzes the concomitant phosphorylation of a threonine and a tyrosine residue in the MAP kinases p38 and plays an important role in the regulation of cellular responses to cytokines and all kinds of stresses. The p38 MAP kinase signal transduction pathway leads to direct activation of transcription factors. Phosphorylation by MAP2K6 asymmetrically activates p38 on one side of the blastodisc, an event which is necessary for blastomere cleavage. The protein is Dual specificity mitogen-activated protein kinase kinase 6 of Danio rerio (Zebrafish).